Reading from the N-terminus, the 195-residue chain is uncharacterized protein (195 aa).

The HTH tetR-type domain maps to 10–70 (EETVARLLQA…ATAYEVLRRQ (61 aa)). A DNA-binding region (H-T-H motif) is located at residues 33-52 (SAAVITKRAGVSVGALFRHF).

This is an uncharacterized protein from Mycobacterium tuberculosis (strain CDC 1551 / Oshkosh).